Here is a 326-residue protein sequence, read N- to C-terminus: Archaeal actin homolog (326 aa).

Residues 10 to 14 (YGDTK), Ser-179, Gln-231, 285 to 288 (GGSN), and Gln-311 contribute to the ATP site.

This sequence belongs to the thermophilic archaeal actin family.

Polymerizes into bundles of filaments, forming a helix with a filament width of 5.5 nm and an axial repeating unit of 5.5 nm. Polymerization of Ta0583 requires NTP and is optimal with ATP, but GTP, UTP, CTP, and even the deoxy form of NTP can also support the polymerization reaction. Nucleoside diphosphate or AMP-PNP does not support polymerization. The sequence is that of Archaeal actin homolog from Thermoplasma acidophilum (strain ATCC 25905 / DSM 1728 / JCM 9062 / NBRC 15155 / AMRC-C165).